Consider the following 586-residue polypeptide: Chaperone protein HscA homolog (586 aa).

It belongs to the heat shock protein 70 family.

Chaperone involved in the maturation of iron-sulfur cluster-containing proteins. Has a low intrinsic ATPase activity which is markedly stimulated by HscB. In Rickettsia typhi (strain ATCC VR-144 / Wilmington), this protein is Chaperone protein HscA homolog.